A 735-amino-acid polypeptide reads, in one-letter code: Nuclear intron maturase 2, mitochondrial (735 aa).

A mitochondrion-targeting transit peptide spans 1-12 (MRRSFSVLGPYK). A Reverse transcriptase domain is found at 161-460 (RDKTDYESLS…KGIMFLDHVL (300 aa)). Residues 485 to 653 (GTLLSVTASL…KFLIEYLTLD (169 aa)) form an intron maturase type-2 region. The interval 707–735 (SSTYNRDNDDQKNKEEDEDSEDGLRIARM) is disordered. The span at 712–721 (RDNDDQKNKE) shows a compositional bias: basic and acidic residues.

It belongs to the plant nuclear intron maturase (nMat) family. Associated to a large ribonucleoprotein complex in mitochondria containing group-II intron RNAs.

It is found in the mitochondrion. In terms of biological role, nuclear-encoded maturase required for splicing of group-II introns in mitochondria. Involved in the splicing of mitochondrial COX2, NAD1 and NAD7 transcripts. Necessary for mitochondrial biogenesis during early developmental stages. The protein is Nuclear intron maturase 2, mitochondrial of Arabidopsis thaliana (Mouse-ear cress).